Consider the following 322-residue polypeptide: Probable F-box protein At1g60180 (322 aa).

In terms of domain architecture, F-box spans 45–88 (FCELSDECIAKILSGCPILESLTLSHCIYLTVLDLSKSLRLRTL).

The chain is Probable F-box protein At1g60180 from Arabidopsis thaliana (Mouse-ear cress).